The chain runs to 213 residues: LexA repressor (213 aa).

The segment at residues 27–47 (QTEIARAFGFKGIRAAQYHLE) is a DNA-binding region (H-T-H motif). Residues serine 133 and lysine 170 each act as for autocatalytic cleavage activity in the active site.

It belongs to the peptidase S24 family. Homodimer.

It carries out the reaction Hydrolysis of Ala-|-Gly bond in repressor LexA.. Functionally, represses a number of genes involved in the response to DNA damage (SOS response), including recA and lexA. Has been shown to bind to the palindromic sequence 5'-CTG-N(8-12)-C-[TC]-G. In the presence of single-stranded DNA, RecA interacts with LexA causing an autocatalytic cleavage which disrupts the DNA-binding part of LexA, leading to derepression of the SOS regulon and eventually DNA repair. The protein is LexA repressor of Xanthomonas citri (Xanthomonas campestris pv. citri).